We begin with the raw amino-acid sequence, 484 residues long: Aspartyl aminopeptidase (484 aa).

Position 1 is an N-acetylmethionine (Met-1). Position 84 (His-84) interacts with Zn(2+). His-159 lines the substrate pocket. Positions 188–206 are enriched in low complexity; it reads PVESKSTTTTTTTESPKTS. Residues 188-213 are disordered; that stretch reads PVESKSTTTTTTTESPKTSDPQDVNS. Zn(2+) is bound at residue Asp-266. Glu-301 is a substrate binding site. The Zn(2+) site is built by Glu-302 and Asp-354. Residues Asp-354, His-357, Lys-382, and Tyr-389 each contribute to the substrate site. Residue His-448 participates in Zn(2+) binding.

The protein belongs to the peptidase M18 family. In terms of assembly, tetrahedron-shaped homododecamer built from six homodimers. It depends on Zn(2+) as a cofactor.

The protein localises to the cytoplasm. It carries out the reaction Release of an N-terminal aspartate or glutamate from a peptide, with a preference for aspartate.. In terms of biological role, likely to play an important role in intracellular protein and peptide metabolism. In Dictyostelium discoideum (Social amoeba), this protein is Aspartyl aminopeptidase (dnpep).